Reading from the N-terminus, the 217-residue chain is Monomethylamine corrinoid protein 2 (217 aa).

The 91-residue stretch at 1–91 folds into the B12-binding N-terminal domain; that stretch reads MTNTEIFDKL…ELEKNKKEGD (91 aa). The region spanning 93–217 is the B12-binding domain; sequence AGLAITFVAE…AAKVALEVMK (125 aa). Residue His-106 coordinates methylcob(III)alamin.

It belongs to the methylamine corrinoid protein family. In terms of assembly, can form a complex with MtmB.

The protein operates within one-carbon metabolism; methanogenesis from methylamine. Its function is as follows. Acts as a methyl group carrier between MtmB and MtbA. The protein is Monomethylamine corrinoid protein 2 (mtmC2) of Methanosarcina barkeri.